The primary structure comprises 607 residues: Glutamine--fructose-6-phosphate aminotransferase [isomerizing] (607 aa).

The active-site Nucleophile; for GATase activity is the C2. The Glutamine amidotransferase type-2 domain occupies 2–217; that stretch reads CGIIGIIGRE…EGDWVVLTRE (216 aa). 2 SIS domains span residues 283–422 and 455–597; these read PDFD…VKGQ and VATA…VDQP. K602 acts as the For Fru-6P isomerization activity in catalysis.

As to quaternary structure, homodimer.

The protein localises to the cytoplasm. It carries out the reaction D-fructose 6-phosphate + L-glutamine = D-glucosamine 6-phosphate + L-glutamate. In terms of biological role, catalyzes the first step in hexosamine metabolism, converting fructose-6P into glucosamine-6P using glutamine as a nitrogen source. The protein is Glutamine--fructose-6-phosphate aminotransferase [isomerizing] of Zymomonas mobilis subsp. mobilis (strain ATCC 31821 / ZM4 / CP4).